The following is a 190-amino-acid chain: Putative 3-methyladenine DNA glycosylase (190 aa).

The protein belongs to the DNA glycosylase MPG family.

The polypeptide is Putative 3-methyladenine DNA glycosylase (Chlamydia abortus (strain DSM 27085 / S26/3) (Chlamydophila abortus)).